Here is a 328-residue protein sequence, read N- to C-terminus: GMP reductase (328 aa).

Cys-176 serves as the catalytic Thioimidate intermediate. An NADP(+)-binding site is contributed by 205-228 (IIADGGIRTHGDIAKSIRFGASMI).

Belongs to the IMPDH/GMPR family. GuaC type 2 subfamily.

The catalysed reaction is IMP + NH4(+) + NADP(+) = GMP + NADPH + 2 H(+). Its function is as follows. Catalyzes the irreversible NADPH-dependent deamination of GMP to IMP. It functions in the conversion of nucleobase, nucleoside and nucleotide derivatives of G to A nucleotides, and in maintaining the intracellular balance of A and G nucleotides. The protein is GMP reductase of Streptococcus pneumoniae serotype 4 (strain ATCC BAA-334 / TIGR4).